The chain runs to 267 residues: 3-methyl-2-oxobutanoate hydroxymethyltransferase (267 aa).

Residues Asp45 and Asp84 each coordinate Mg(2+). Residues 45–46, Asp84, and Lys113 contribute to the 3-methyl-2-oxobutanoate site; that span reads DS. Glu115 is a Mg(2+) binding site. Glu182 functions as the Proton acceptor in the catalytic mechanism.

This sequence belongs to the PanB family. As to quaternary structure, homodecamer; pentamer of dimers. The cofactor is Mg(2+).

The protein resides in the cytoplasm. It carries out the reaction 3-methyl-2-oxobutanoate + (6R)-5,10-methylene-5,6,7,8-tetrahydrofolate + H2O = 2-dehydropantoate + (6S)-5,6,7,8-tetrahydrofolate. The protein operates within cofactor biosynthesis; coenzyme A biosynthesis. Functionally, catalyzes the reversible reaction in which hydroxymethyl group from 5,10-methylenetetrahydrofolate is transferred onto alpha-ketoisovalerate to form ketopantoate. This Saccharolobus islandicus (strain M.16.27) (Sulfolobus islandicus) protein is 3-methyl-2-oxobutanoate hydroxymethyltransferase.